We begin with the raw amino-acid sequence, 339 residues long: DNA-directed RNA polymerase subunit alpha (339 aa).

An alpha N-terminal domain (alpha-NTD) region spans residues 1–233 (MVREEVAGST…DLFLPFLHAE (233 aa)). The segment at 264–339 (KKGIPLNCIF…IDLLKNKLSF (76 aa)) is alpha C-terminal domain (alpha-CTD).

It belongs to the RNA polymerase alpha chain family. In plastids the minimal PEP RNA polymerase catalytic core is composed of four subunits: alpha, beta, beta', and beta''. When a (nuclear-encoded) sigma factor is associated with the core the holoenzyme is formed, which can initiate transcription.

The protein localises to the plastid. It localises to the chloroplast. It carries out the reaction RNA(n) + a ribonucleoside 5'-triphosphate = RNA(n+1) + diphosphate. Functionally, DNA-dependent RNA polymerase catalyzes the transcription of DNA into RNA using the four ribonucleoside triphosphates as substrates. The chain is DNA-directed RNA polymerase subunit alpha from Bromus inermis (Smooth brome grass).